A 235-amino-acid chain; its full sequence is Large ribosomal subunit protein uL1 (235 aa).

This sequence belongs to the universal ribosomal protein uL1 family. Part of the 50S ribosomal subunit.

Its function is as follows. Binds directly to 23S rRNA. The L1 stalk is quite mobile in the ribosome, and is involved in E site tRNA release. Functionally, protein L1 is also a translational repressor protein, it controls the translation of the L11 operon by binding to its mRNA. This is Large ribosomal subunit protein uL1 from Synechococcus sp. (strain CC9605).